Here is a 429-residue protein sequence, read N- to C-terminus: Enolase (429 aa).

Gln-167 serves as a coordination point for (2R)-2-phosphoglycerate. The active-site Proton donor is Glu-209. Mg(2+)-binding residues include Asp-246, Glu-289, and Asp-316. (2R)-2-phosphoglycerate is bound by residues Lys-341, Arg-370, Ser-371, and Lys-392. Lys-341 (proton acceptor) is an active-site residue.

This sequence belongs to the enolase family. As to quaternary structure, component of the RNA degradosome, a multiprotein complex involved in RNA processing and mRNA degradation. Mg(2+) serves as cofactor.

Its subcellular location is the cytoplasm. It is found in the secreted. The protein localises to the cell surface. It catalyses the reaction (2R)-2-phosphoglycerate = phosphoenolpyruvate + H2O. It functions in the pathway carbohydrate degradation; glycolysis; pyruvate from D-glyceraldehyde 3-phosphate: step 4/5. In terms of biological role, catalyzes the reversible conversion of 2-phosphoglycerate (2-PG) into phosphoenolpyruvate (PEP). It is essential for the degradation of carbohydrates via glycolysis. The polypeptide is Enolase (Pseudomonas entomophila (strain L48)).